The primary structure comprises 645 residues: MSVINCEEVKRDEFHTEKYYESYNIFGAHIVTEDEMRGVRFTVWAPHAKAMSVVGDFNEWDYEQHKMLQVTEEGIWSLFIPHIEEREIYKYAIETMAGDVILKADPYAVYAEVRPNTASVVFDIKGYEWNDKNWSRKKKKKSVYKEAMTVYELHFGSWKKKEDGTLYSYREMAEELIPYVVEHQFTHIEIMPLVEHPYDRSWGYQGTGYYAATSRFGTPHDLMHFVDECHKYGIGVILDWVPGHFCKDAHGLYLFDGTPTYEYKDKDVQENPVWGTVNFDLGKREVRNFLISNALFWMRYFHIDGFRVDAVANMLYWNKEGQEQSNEHAVSFLRELNEAVFAEDEDFLMTAEDSTAWPLVTAPTYEGGLGFNYKWNMGWMNDVLKYMECAPEYRKYIHDKMTFSLLYAYSENFILPLSHDEVVHGKKSLLNKMPGDYWDKFAQLRLLYGYFFTHPGKKLLFMGGEFGQFDEWKDLEDLDWNLHDFEMHRYMHDYFKELIALYKRSKPLWQLDHSPEGFQWIDANNNEQSIFSFIRQGDKQEDALVVVCNFTKATYENYKVGVPDFEYYNEILNSDAEQYGGSGQVNKKRLKAIQEPYHNQAAHVEITIPPFGVSILRPVKTRKGSKKQDGSKTKVRSNVTSRGKR.

The active-site Nucleophile is the aspartate 309. Glutamate 352 acts as the Proton donor in catalysis. The interval 619-645 is disordered; that stretch reads VKTRKGSKKQDGSKTKVRSNVTSRGKR. Positions 636–645 are enriched in polar residues; the sequence is RSNVTSRGKR.

The protein belongs to the glycosyl hydrolase 13 family. GlgB subfamily. Monomer.

The enzyme catalyses Transfers a segment of a (1-&gt;4)-alpha-D-glucan chain to a primary hydroxy group in a similar glucan chain.. The protein operates within glycan biosynthesis; glycogen biosynthesis. In terms of biological role, catalyzes the formation of the alpha-1,6-glucosidic linkages in glycogen by scission of a 1,4-alpha-linked oligosaccharide from growing alpha-1,4-glucan chains and the subsequent attachment of the oligosaccharide to the alpha-1,6 position. This Bacillus cereus (strain Q1) protein is 1,4-alpha-glucan branching enzyme GlgB.